Here is a 296-residue protein sequence, read N- to C-terminus: Transcription factor bHLH99 (296 aa).

The region spanning 99–150 (NQRMNHIAVERNRRKQMNHFLSILKSMMPLSYSQPNDQASIIEGTISYLKKL) is the bHLH domain.

As to quaternary structure, homodimer. Expressed constitutively in roots, stems, and flowers.

It is found in the nucleus. The sequence is that of Transcription factor bHLH99 (BHLH99) from Arabidopsis thaliana (Mouse-ear cress).